A 37-amino-acid chain; its full sequence is Large ribosomal subunit protein bL36 (37 aa).

It belongs to the bacterial ribosomal protein bL36 family.

The sequence is that of Large ribosomal subunit protein bL36 from Chromohalobacter salexigens (strain ATCC BAA-138 / DSM 3043 / CIP 106854 / NCIMB 13768 / 1H11).